The chain runs to 290 residues: Protein male abnormal 3 (290 aa).

2 DNA-binding regions (DM) span residues Cys-28–Lys-74 and Cys-94–Arg-142. 2 disordered regions span residues Lys-139 to Glu-167 and Ile-179 to Ser-202. The span at Lys-146–Arg-155 shows a compositional bias: basic and acidic residues. Low complexity predominate over residues Thr-182–Ser-202.

In terms of tissue distribution, expression is undetectable in hermaphrodites, but persists in males. In males, expressed in cells of the tail tip.

The protein localises to the nucleus. Functionally, transcription factor which binds the DNA motif 5'-[CGA][TCA][TA]ACAATGT[AT][TGA]C-3', probably as a monomer. Acts partially redundantly with the transcription factor dmd-3 to coordinate tail tip cell fusion and retraction and thereby regulate male tail tip morphogenesis. Promotes male-specific development of two tissues, the peripheral nervous system and the intestine. In the peripheral nervous system, directs differentiation of sensory ray neuroblasts into peripheral sense organs. In the intestine, causes repression of vitellogenin gene transcription. The chain is Protein male abnormal 3 from Caenorhabditis elegans.